We begin with the raw amino-acid sequence, 87 residues long: Kappa-bungarotoxin (87 aa).

The N-terminal stretch at 1–21 (MKTLLLTLVVVTIVCLDLGYT) is a signal peptide. 5 disulfide bridges follow: C24/C42, C35/C63, C48/C52, C67/C79, and C80/C85.

It belongs to the three-finger toxin family. Long-chain subfamily. Kappa-neurotoxin sub-subfamily. As to quaternary structure, homodimer and heterodimer; non-covalently linked. In terms of tissue distribution, expressed by the venom gland.

It localises to the secreted. Postsynaptic neurotoxin that binds and inhibits neuronal nicotinic acetylcholine receptors (nAChR) with high affinity (IC(50)&lt;100 nM). Is a selective, and slowly reversible antagonist of alpha-3/CHRNA3-containing and some alpha-4/CHRNA4-containing AChRs. The protein is Kappa-bungarotoxin of Bungarus multicinctus (Many-banded krait).